The primary structure comprises 403 residues: S-adenosylmethionine synthase (403 aa).

ATP is bound at residue His-17. Mg(2+) is bound at residue Asp-19. Glu-45 lines the K(+) pocket. L-methionine is bound by residues Glu-58 and Gln-104. The tract at residues 104 to 114 is flexible loop; the sequence is QSPDIAQGVDT. ATP is bound by residues 179 to 181, 250 to 251, Asp-259, 265 to 266, Ala-282, and Lys-286; these read DGK, KF, and RK. L-methionine is bound at residue Asp-259. Lys-290 lines the L-methionine pocket.

The protein belongs to the AdoMet synthase family. In terms of assembly, homotetramer; dimer of dimers. Requires Mg(2+) as cofactor. K(+) serves as cofactor.

The protein localises to the cytoplasm. It catalyses the reaction L-methionine + ATP + H2O = S-adenosyl-L-methionine + phosphate + diphosphate. Its pathway is amino-acid biosynthesis; S-adenosyl-L-methionine biosynthesis; S-adenosyl-L-methionine from L-methionine: step 1/1. Catalyzes the formation of S-adenosylmethionine (AdoMet) from methionine and ATP. The overall synthetic reaction is composed of two sequential steps, AdoMet formation and the subsequent tripolyphosphate hydrolysis which occurs prior to release of AdoMet from the enzyme. The sequence is that of S-adenosylmethionine synthase from Mycolicibacterium paratuberculosis (strain ATCC BAA-968 / K-10) (Mycobacterium paratuberculosis).